The following is a 461-amino-acid chain: Proton extrusion protein PxcA (461 aa).

Helical transmembrane passes span 244 to 264, 339 to 359, 386 to 406, and 421 to 441; these read FMLL…ALIV, LKNI…VFTG, IILF…EVLV, and FINM…KYWI.

Belongs to the CemA family.

It is found in the cell inner membrane. Functionally, required for H(+) efflux immediately after light irradiation to form a rapid H(+) concentration gradient across the thylakoid membranes. Together with PxcL, contributes to transient H(+) uptake following dark to light transition. The protein is Proton extrusion protein PxcA of Thermosynechococcus vestitus (strain NIES-2133 / IAM M-273 / BP-1).